The sequence spans 443 residues: Probable D-serine dehydratase (443 aa).

Lysine 116 is subject to N6-(pyridoxal phosphate)lysine.

This sequence belongs to the serine/threonine dehydratase family. DsdA subfamily. Pyridoxal 5'-phosphate serves as cofactor.

The enzyme catalyses D-serine = pyruvate + NH4(+). This is Probable D-serine dehydratase from Bacillus cereus (strain AH187).